The chain runs to 303 residues: Archaeosortase A (303 aa).

Transmembrane regions (helical) follow at residues 3–23, 36–56, 60–80, 93–113, 169–189, 200–220, and 259–279; these read GLLS…GAVA, TAAW…FTLV, YIEG…GWLL, AVAA…FTLL, VVLA…IAAV, LAIA…FIAI, and LAVV…PELL. Catalysis depends on cysteine 173, which acts as the Acyl-thioester intermediate. Residue arginine 214 is the Proton donor of the active site.

The protein belongs to the exosortase/archaeosortase family. Archaeosortase A subfamily.

It is found in the cell membrane. Its function is as follows. Transpeptidase that recognizes and modifies its substrate by proteolytic cleavage of a sorting signal. Following cleavage, a covalent intermediate is formed via a thioester bond between the archaeosortase and its substrate, which is then transferred and covalently attached to the cell membrane. This sortase recognizes a tripartite structure consisting of a conserved Pro-Gly-Phe (PGF) motif, followed by a transmembrane alpha helix domain and a cluster of basic residues, usually at the C-terminus of target proteins. Confirmed substrates include the cell surface S-layer glycoprotein Csg and HVO_0405. ArtA is required for the C-terminal processing of Csg and for its lipidation and attachment to the archaeal plasma membrane. It is also required for the processing of HVO_0405, which contains an atypical central tripartite structure. This is Archaeosortase A from Haloferax volcanii (strain ATCC 29605 / DSM 3757 / JCM 8879 / NBRC 14742 / NCIMB 2012 / VKM B-1768 / DS2) (Halobacterium volcanii).